A 179-amino-acid polypeptide reads, in one-letter code: MARFQEFYKEKVVPGLIEKFGYKSVMEVPRITKITLNMGLGEAVADKKIIENAVGDLTKIAGQKPVVTKARKAIAGFKIRQGYPIGAMVTLRGRAMYEFLDRFVTVALPRVRDFRGVSGRAFDGRGNYNIGVKEQIIFPEIDYDKIDALRGLNISITTTAKTDDEAKALLASFKFPFRN.

This sequence belongs to the universal ribosomal protein uL5 family. Part of the 50S ribosomal subunit; part of the 5S rRNA/L5/L18/L25 subcomplex. Contacts the 5S rRNA and the P site tRNA. Forms a bridge to the 30S subunit in the 70S ribosome.

In terms of biological role, this is one of the proteins that bind and probably mediate the attachment of the 5S RNA into the large ribosomal subunit, where it forms part of the central protuberance. In the 70S ribosome it contacts protein S13 of the 30S subunit (bridge B1b), connecting the 2 subunits; this bridge is implicated in subunit movement. Contacts the P site tRNA; the 5S rRNA and some of its associated proteins might help stabilize positioning of ribosome-bound tRNAs. The polypeptide is Large ribosomal subunit protein uL5 (Burkholderia mallei (strain NCTC 10247)).